The chain runs to 609 residues: DNA polymerase alpha subunit B (609 aa).

S155 carries the post-translational modification Phosphoserine. Residue T164 is modified to Phosphothreonine. Phosphoserine is present on residues S166 and S168.

The protein belongs to the DNA polymerase alpha subunit B family. As to quaternary structure, component of the alpha DNA polymerase complex (also known as the alpha DNA polymerase-primase complex) consisting of four subunits: the catalytic subunit PolA1, the regulatory subunit PolA2, and the primase complex subunits Prim1 and Prim2 respectively. PolA1 associates with the DNA primase complex before association with PolA2. Post-translationally, phosphorylated in embryos until cycle 13. In terms of tissue distribution, expressed in embryos (at protein level).

It localises to the nucleus. Functionally, accessory subunit of the DNA polymerase alpha complex (also known as the alpha DNA polymerase-primase complex) which plays an essential role in the initiation of DNA synthesis. During the S phase of the cell cycle, the DNA polymerase alpha complex (composed of a catalytic subunit PolA1, an accessory subunit PolA2 and two primase subunits, the catalytic subunit Prim1 and the regulatory subunit Prim2) is recruited to DNA at the replicative forks. The primase subunit of the polymerase alpha complex initiates DNA synthesis by oligomerising short RNA primers on both leading and lagging strands. These primers are initially extended by the polymerase alpha catalytic subunit and subsequently transferred to polymerase delta and polymerase epsilon for processive synthesis on the lagging and leading strand, respectively. This is DNA polymerase alpha subunit B from Drosophila melanogaster (Fruit fly).